The primary structure comprises 208 residues: FMN-dependent NADH:quinone oxidoreductase 1 (208 aa).

17 to 19 (SVS) contributes to the FMN binding site.

It belongs to the azoreductase type 1 family. Homodimer. It depends on FMN as a cofactor.

It catalyses the reaction 2 a quinone + NADH + H(+) = 2 a 1,4-benzosemiquinone + NAD(+). The catalysed reaction is N,N-dimethyl-1,4-phenylenediamine + anthranilate + 2 NAD(+) = 2-(4-dimethylaminophenyl)diazenylbenzoate + 2 NADH + 2 H(+). In terms of biological role, quinone reductase that provides resistance to thiol-specific stress caused by electrophilic quinones. Also exhibits azoreductase activity. Catalyzes the reductive cleavage of the azo bond in aromatic azo compounds to the corresponding amines. This Listeria innocua serovar 6a (strain ATCC BAA-680 / CLIP 11262) protein is FMN-dependent NADH:quinone oxidoreductase 1.